A 565-amino-acid chain; its full sequence is Tetratricopeptide repeat protein 39A (565 aa).

TPR repeat units follow at residues 271 to 304 (AIFL…QQVW), 461 to 494 (CLIQ…EKKL), and 502 to 535 (PNAL…YKVY).

The protein belongs to the TTC39 family.

The protein is Tetratricopeptide repeat protein 39A (ttc39a) of Danio rerio (Zebrafish).